We begin with the raw amino-acid sequence, 91 residues long: Small ribosomal subunit protein bS18 (91 aa).

This sequence belongs to the bacterial ribosomal protein bS18 family. Part of the 30S ribosomal subunit. Forms a tight heterodimer with protein bS6.

Functionally, binds as a heterodimer with protein bS6 to the central domain of the 16S rRNA, where it helps stabilize the platform of the 30S subunit. The protein is Small ribosomal subunit protein bS18 of Burkholderia lata (strain ATCC 17760 / DSM 23089 / LMG 22485 / NCIMB 9086 / R18194 / 383).